The chain runs to 300 residues: NAD kinase (300 aa).

Residue aspartate 75 is the Proton acceptor of the active site. Residues 75–76 (DG), 149–150 (ND), arginine 177, aspartate 179, 190–195 (TAYALS), alanine 214, and glutamine 248 each bind NAD(+).

Belongs to the NAD kinase family. The cofactor is a divalent metal cation.

It localises to the cytoplasm. It carries out the reaction NAD(+) + ATP = ADP + NADP(+) + H(+). In terms of biological role, involved in the regulation of the intracellular balance of NAD and NADP, and is a key enzyme in the biosynthesis of NADP. Catalyzes specifically the phosphorylation on 2'-hydroxyl of the adenosine moiety of NAD to yield NADP. The protein is NAD kinase of Burkholderia ambifaria (strain MC40-6).